Reading from the N-terminus, the 132-residue chain is Auxin-responsive protein SAUR72 (132 aa).

The tract at residues serine 22 to histidine 54 is disordered. Residues aspartate 23–serine 33 show a composition bias toward basic and acidic residues.

The protein belongs to the ARG7 family. As to quaternary structure, interacts with and inhibits PP2C-D subfamily of type 2C phosphatases such as PP2C67/PP2C-D1. Highly expressed in the steles of roots and hypocotyls.

The protein resides in the cytoplasm. In terms of biological role, provide a mechanistic link between auxin and plasma membrane H(+)-ATPases (PM H(+)-ATPases, e.g. AHA1 and AHA2), and triggers PM H(+)-ATPases activity by promoting phosphorylation of their C-terminal autoinhibitory domain as a result of PP2C-D subfamily of type 2C phosphatases inhibition, thus leading to the acidification of the apoplast and the facilitation of solutes and water uptake to drive cell expansion. Plays a role in the regulation of cell expansion, root meristem patterning and auxin transport. The polypeptide is Auxin-responsive protein SAUR72 (Arabidopsis thaliana (Mouse-ear cress)).